The chain runs to 235 residues: MAAKIFCLLMLLGLSASAATATIFPQCSQAPIASLLPPYLSPAVSSVCENPILQPYRIQQAIAAGILPLSPLFLQQSSALLQQLPLVHLLAQNIRAQQLQQLVLANVAAYSQQQQFLPFNQLAALNSAAYLQQQQLLPFSQLTAAYPQQFLPFNQLAALNSAAYLQQQQLLPFSQLAVVSPAAFLTQQQLLPFYLHAVPNAGTLLQLQQLLPFNQLALTNPAAFYQQPIIGGALF.

The signal sequence occupies residues 1 to 21 (MAAKIFCLLMLLGLSASAATA).

This sequence belongs to the zein family.

In terms of biological role, zeins are major seed storage proteins. The sequence is that of Zein-alpha PMS1 (ZMPMS1) from Zea mays (Maize).